A 234-amino-acid chain; its full sequence is Glucosamine-6-phosphate deaminase (234 aa).

Aspartate 62 serves as the catalytic Proton acceptor; for enolization step. Asparagine 128 functions as the For ring-opening step in the catalytic mechanism. Histidine 130 functions as the Proton acceptor; for ring-opening step in the catalytic mechanism. Glutamate 135 acts as the For ring-opening step in catalysis.

Belongs to the glucosamine/galactosamine-6-phosphate isomerase family. NagB subfamily.

It catalyses the reaction alpha-D-glucosamine 6-phosphate + H2O = beta-D-fructose 6-phosphate + NH4(+). Its pathway is amino-sugar metabolism; N-acetylneuraminate degradation; D-fructose 6-phosphate from N-acetylneuraminate: step 5/5. Its function is as follows. Catalyzes the reversible isomerization-deamination of glucosamine 6-phosphate (GlcN6P) to form fructose 6-phosphate (Fru6P) and ammonium ion. The protein is Glucosamine-6-phosphate deaminase of Lactobacillus delbrueckii subsp. bulgaricus (strain ATCC 11842 / DSM 20081 / BCRC 10696 / JCM 1002 / NBRC 13953 / NCIMB 11778 / NCTC 12712 / WDCM 00102 / Lb 14).